A 740-amino-acid polypeptide reads, in one-letter code: Phosphoribosylformylglycinamidine synthase subunit PurL (740 aa).

The active site involves H55. ATP contacts are provided by Y58 and K97. Residue E99 participates in Mg(2+) binding. Residues 100 to 103 (SHNH) and R122 contribute to the substrate site. The Proton acceptor role is filled by H101. D123 is a Mg(2+) binding site. Q246 is a binding site for substrate. D276 lines the Mg(2+) pocket. Residue 320 to 322 (ESQ) coordinates substrate. The ATP site is built by D501 and G538. Mg(2+) is bound at residue N539. S541 is a binding site for substrate.

Belongs to the FGAMS family. In terms of assembly, monomer. Part of the FGAM synthase complex composed of 1 PurL, 1 PurQ and 2 PurS subunits.

The protein localises to the cytoplasm. The enzyme catalyses N(2)-formyl-N(1)-(5-phospho-beta-D-ribosyl)glycinamide + L-glutamine + ATP + H2O = 2-formamido-N(1)-(5-O-phospho-beta-D-ribosyl)acetamidine + L-glutamate + ADP + phosphate + H(+). Its pathway is purine metabolism; IMP biosynthesis via de novo pathway; 5-amino-1-(5-phospho-D-ribosyl)imidazole from N(2)-formyl-N(1)-(5-phospho-D-ribosyl)glycinamide: step 1/2. Functionally, part of the phosphoribosylformylglycinamidine synthase complex involved in the purines biosynthetic pathway. Catalyzes the ATP-dependent conversion of formylglycinamide ribonucleotide (FGAR) and glutamine to yield formylglycinamidine ribonucleotide (FGAM) and glutamate. The FGAM synthase complex is composed of three subunits. PurQ produces an ammonia molecule by converting glutamine to glutamate. PurL transfers the ammonia molecule to FGAR to form FGAM in an ATP-dependent manner. PurS interacts with PurQ and PurL and is thought to assist in the transfer of the ammonia molecule from PurQ to PurL. This Lacticaseibacillus casei (Lactobacillus casei) protein is Phosphoribosylformylglycinamidine synthase subunit PurL.